A 195-amino-acid chain; its full sequence is Probable septum site-determining protein MinC (195 aa).

It belongs to the MinC family. In terms of assembly, interacts with MinD and FtsZ.

Cell division inhibitor that blocks the formation of polar Z ring septums. Rapidly oscillates between the poles of the cell to destabilize FtsZ filaments that have formed before they mature into polar Z rings. Prevents FtsZ polymerization. The polypeptide is Probable septum site-determining protein MinC (Helicobacter pylori (strain P12)).